A 184-amino-acid chain; its full sequence is Ribosome-recycling factor (184 aa).

The protein belongs to the RRF family.

Its subcellular location is the cytoplasm. Responsible for the release of ribosomes from messenger RNA at the termination of protein biosynthesis. May increase the efficiency of translation by recycling ribosomes from one round of translation to another. The polypeptide is Ribosome-recycling factor (Psychrobacter arcticus (strain DSM 17307 / VKM B-2377 / 273-4)).